The primary structure comprises 322 residues: Extracellular metalloprotease AFUB_008060 (322 aa).

Positions 1–22 (MLPFNSCVYVLLIISLMSNCRA) are cleaved as a signal peptide. 2 N-linked (GlcNAc...) asparagine glycosylation sites follow: Asn-123 and Asn-197. His-233 provides a ligand contact to Zn(2+). The active site involves Glu-234. Position 237 (His-237) interacts with Zn(2+). Cys-272 and Cys-299 are disulfide-bonded.

This sequence belongs to the peptidase M43B family.

The protein resides in the secreted. Its function is as follows. Secreted metalloproteinase that allows assimilation of proteinaceous substrates. Plays a pivotal role as a pathogenicity determinant during infections and contributes to the ability of the pathogen to persist within the mammalian host. In Aspergillus fumigatus (strain CBS 144.89 / FGSC A1163 / CEA10) (Neosartorya fumigata), this protein is Extracellular metalloprotease AFUB_008060.